The sequence spans 72 residues: Protein kish-A (72 aa).

The first 26 residues, 1–26, serve as a signal peptide directing secretion; it reads MSAIFNFQSLLTVILLLICTCAYIRS. At 27–53 the chain is on the extracellular side; that stretch reads LAPSLLDKNKSGLLGIFWKCARIGERK. N35 is a glycosylation site (N-linked (GlcNAc...) asparagine). The chain crosses the membrane as a helical span at residues 54–71; it reads SPYVAVCCVVMAFSILFM. Q72 is a topological domain (cytoplasmic).

It belongs to the KISH family.

The protein resides in the golgi apparatus membrane. Its function is as follows. Involved in the early part of the secretory pathway. This Taeniopygia guttata (Zebra finch) protein is Protein kish-A (TMEM167A).